Here is a 391-residue protein sequence, read N- to C-terminus: Chorismate synthase (391 aa).

NADP(+) is bound at residue R48. FMN contacts are provided by residues R126–S128, G286, K301–S305, and R328.

It belongs to the chorismate synthase family. FMNH2 is required as a cofactor.

The catalysed reaction is 5-O-(1-carboxyvinyl)-3-phosphoshikimate = chorismate + phosphate. It participates in metabolic intermediate biosynthesis; chorismate biosynthesis; chorismate from D-erythrose 4-phosphate and phosphoenolpyruvate: step 7/7. In terms of biological role, catalyzes the anti-1,4-elimination of the C-3 phosphate and the C-6 proR hydrogen from 5-enolpyruvylshikimate-3-phosphate (EPSP) to yield chorismate, which is the branch point compound that serves as the starting substrate for the three terminal pathways of aromatic amino acid biosynthesis. This reaction introduces a second double bond into the aromatic ring system. The sequence is that of Chorismate synthase from Saccharolobus islandicus (strain Y.N.15.51 / Yellowstone #2) (Sulfolobus islandicus).